The sequence spans 619 residues: Cationic amino acid transporter 3 (619 aa).

The Cytoplasmic segment spans residues 1–36 (MLWQALRRFGQKLVRRRLLELGMGETRLARCLSTLD). The chain crosses the membrane as a helical span at residues 37-57 (LVALGVGSTLGAGVYVLAGEV). Residues 58–61 (AKEK) lie on the Extracellular side of the membrane. The helical transmembrane segment at 62 to 82 (AGPSIVICFLVAALSSVLAGL) threads the bilayer. Over 83–107 (CYAEFGARVPGSGSAYLYSYVTVGE) the chain is Cytoplasmic. A helical transmembrane segment spans residues 108 to 128 (LWAFTTGWNLILSYVIGTASV). The Extracellular portion of the chain corresponds to 129 to 162 (ARAWSSAFDNLIGNHISQTLKGTILLNMPHVLAE). A helical membrane pass occupies residues 163–183 (YPDFFALALVLLLTGLLVLGA). Residues 184–191 (NESGLVTK) lie on the Cytoplasmic side of the membrane. A helical transmembrane segment spans residues 192–212 (VFTGMNLLVLGFVIISGFIKG). Topologically, residues 213 to 244 (ELRNWKLTKEDYCLTMSESNGTCSLDSMGSGG) are extracellular. Residue asparagine 232 is glycosylated (N-linked (GlcNAc...) asparagine). A helical transmembrane segment spans residues 245–265 (FMPFGLEGILRGAATCFYAFV). Topologically, residues 266–285 (GFDCIATTGEEAQNPQRSIP) are cytoplasmic. A helical membrane pass occupies residues 286–306 (MGIVISLSICFLAYFGVSSAL). Residues 307–335 (TLMMPYYKLQPESPLPEAFTYVGWEPARY) are Extracellular-facing. Residues 336-356 (LVAIGSLCALSTSLLGSMFPM) traverse the membrane as a helical segment. Over 357–382 (PRVIYAMAEDGLLFRVLARVHNGTHT) the chain is Cytoplasmic. A helical membrane pass occupies residues 383 to 403 (PIVATVVSGVIAAFMAFLFEL). The Extracellular segment spans residues 404–406 (TDL). A helical transmembrane segment spans residues 407-427 (VDLMSIGTLLAYSLVSICVLI). Topologically, residues 428 to 475 (LRYQPDQEMKNGEEEVELQEERTLEAEKLTVQALFCQVDSIPTLLSGR) are cytoplasmic. The helical transmembrane segment at 476-496 (IVYVCSSLLAVLLTVLCLVLT) threads the bilayer. Over 497 to 507 (WWTTPLHSGDP) the chain is Extracellular. Residues 508 to 528 (VWVTVVVLILGLILGISGVIW) form a helical membrane-spanning segment. The Cytoplasmic portion of the chain corresponds to 529 to 540 (RQPQNRTPLHFK). A helical membrane pass occupies residues 541–561 (VPVVPLLPLVSIFVNVYLMMQ). At 562-569 (MTADTWAR) the chain is on the extracellular side. A helical membrane pass occupies residues 570–590 (FGVWMLIGFAIYFGYGIQHSV). At 591–619 (EEVKNHQTLPKTRPQTIDLDLTTSCVHSI) the chain is on the cytoplasmic side. Threonine 606 carries the post-translational modification Phosphothreonine. A Phosphoserine modification is found at serine 618.

Belongs to the amino acid-polyamine-organocation (APC) superfamily. Cationic amino acid transporter (CAT) (TC 2.A.3.3) family. In terms of processing, N-glycosylated. In terms of tissue distribution, highly expressed in brain.

The protein localises to the cell membrane. The catalysed reaction is L-arginine(in) = L-arginine(out). It catalyses the reaction L-lysine(in) = L-lysine(out). The enzyme catalyses L-ornithine(in) = L-ornithine(out). Its activity is regulated as follows. Inhibited by high potassium ions-induced membrane depolarization. Its function is as follows. Uniporter that mediates the uptake of cationic L-amino acids such as L-arginine, L-lysine and L-ornithine. The transport is sodium ions- and pH-independent, moderately trans-stimulated and is mediated by passive diffusion. This is Cationic amino acid transporter 3 from Rattus norvegicus (Rat).